An 889-amino-acid chain; its full sequence is Phosphatidylinositol 3-kinase VPS34 (889 aa).

The C2 PI3K-type domain occupies 34–184 (ASEKLIDPQL…EWIDELVLKK (151 aa)). Residues 298 to 540 (SDKHVKPDAK…ESFLSRLNSN (243 aa)) enclose the PIK helical domain. One can recognise a PI3K/PI4K catalytic domain in the interval 607-873 (MIDQCNVFKS…LINDSVNALL (267 aa)). The tract at residues 613–619 (VFKSSLS) is G-loop. The interval 742 to 750 (GVGDRHLDN) is catalytic loop. Residues 761–782 (HADFGYILGQDPKPFPPLMKLP) form an activation loop region.

Belongs to the PI3/PI4-kinase family. Type III PI4K subfamily. In terms of assembly, component of the autophagy-specific VPS34 PI3-kinase complex I composed of VPS15, VPS30, VPS34, ATG14 and ATG38; and of the VPS34 PI3-kinase complex II composed of VPS15, VPS30, VPS34 and VPS38. In terms of processing, autophosphorylated.

It localises to the golgi apparatus. Its subcellular location is the trans-Golgi network membrane. The protein resides in the endosome membrane. It catalyses the reaction a 1,2-diacyl-sn-glycero-3-phospho-(1D-myo-inositol) + ATP = a 1,2-diacyl-sn-glycero-3-phospho-(1D-myo-inositol-3-phosphate) + ADP + H(+). In terms of biological role, multifunctional phosphatidylinositol 3-kinase that plays a role in signaling in modulation of host immune response, intracellular survival and virulence. Catalytic subunit of the autophagy-specific VPS34 PI3-kinase complex I essential to recruit the ATG8-phosphatidylinositol conjugate and the ATG12-ATG5 conjugate to the pre-autophagosomal structure. Also involved in endosome-to-Golgi retrograde transport as part of the VPS34 PI3-kinase complex II. This second complex is required for the endosome-to-Golgi retrieval of PEP1 and KEX2, and the recruitment of VPS5 and VPS7, two components of the retromer complex, to endosomal membranes (probably through the synthesis of a specific pool of phosphatidylinositol 3-phosphate recruiting the retromer to the endosomes). Finally, it might also be involved in ethanol tolerance and cell wall integrity. The chain is Phosphatidylinositol 3-kinase VPS34 from Candida glabrata (strain ATCC 2001 / BCRC 20586 / JCM 3761 / NBRC 0622 / NRRL Y-65 / CBS 138) (Yeast).